The sequence spans 304 residues: uncharacterized protein (304 aa).

An ATP-binding site is contributed by 72–79 (GPTGSGKT).

This sequence belongs to the CbbQ/NirQ/NorQ/GpvN family.

This is an uncharacterized protein from Bacillus subtilis (strain 168).